A 294-amino-acid polypeptide reads, in one-letter code: 33 kDa chaperonin (294 aa).

Disulfide bonds link Cys-238-Cys-240 and Cys-271-Cys-274.

The protein belongs to the HSP33 family. Under oxidizing conditions two disulfide bonds are formed involving the reactive cysteines. Under reducing conditions zinc is bound to the reactive cysteines and the protein is inactive.

Its subcellular location is the cytoplasm. Redox regulated molecular chaperone. Protects both thermally unfolding and oxidatively damaged proteins from irreversible aggregation. Plays an important role in the bacterial defense system toward oxidative stress. The chain is 33 kDa chaperonin from Clostridium tetani (strain Massachusetts / E88).